Here is a 288-residue protein sequence, read N- to C-terminus: Glutamate racemase (288 aa).

The segment at 1-21 (MAIARQDVNISSPEATTSDAQ) is disordered. The segment covering 8-21 (VNISSPEATTSDAQ) has biased composition (polar residues). Substrate is bound by residues 32 to 33 (DS) and 64 to 65 (YG). The active-site Proton donor/acceptor is the Cys-96. 97 to 98 (NT) is a binding site for substrate. The active-site Proton donor/acceptor is Cys-209. 210-211 (TH) is a substrate binding site.

Belongs to the aspartate/glutamate racemases family.

It carries out the reaction L-glutamate = D-glutamate. The protein operates within cell wall biogenesis; peptidoglycan biosynthesis. Its function is as follows. Provides the (R)-glutamate required for cell wall biosynthesis. The protein is Glutamate racemase of Proteus mirabilis (strain HI4320).